The chain runs to 937 residues: ABC transporter A family member 4 (937 aa).

The next 7 membrane-spanning stretches (helical) occupy residues 34–54 (LIVIPFYLCVLLVGIQVLFDT), 340–360 (IASVIGPIFLTWVIVLLFPVI), 394–414 (FLAISTLYIICLMIFGSAIGL), 423–443 (SIQFIFYFLCINLQISIAFLV), 455–475 (VAAYLYVFGSGLLGGFLFQFM), 478–498 (GLSFPRGWIFVMELYPGFSLY), and 528–548 (AMDEVFYIIIIEWFLALIAAY). In terms of domain architecture, ABC transporter spans 618–852 (DKLKKVYPGR…YGGSYVLTMT (235 aa)). 653–660 (GPNGAGKT) provides a ligand contact to ATP.

It belongs to the ABC transporter superfamily. ABCA family. CPR flippase (TC 3.A.1.211) subfamily.

The protein localises to the membrane. The polypeptide is ABC transporter A family member 4 (ABCA4) (Arabidopsis thaliana (Mouse-ear cress)).